A 381-amino-acid polypeptide reads, in one-letter code: Cytochrome b (381 aa).

4 helical membrane passes run 34–54, 78–99, 114–134, and 179–199; these read FGSL…FLAM, WLIR…YLHI, WNIG…GYVL, and FFAF…IHLL. Heme b contacts are provided by His-84 and His-98. Residues His-183 and His-197 each coordinate heme b. His-202 contacts a ubiquinone. The next 4 helical transmembrane spans lie at 227-247, 289-309, 321-341, and 348-368; these read YKDL…ALFT, LGGV…PLLH, LTQI…WIGG, and FIMV…IIMP.

The protein belongs to the cytochrome b family. As to quaternary structure, the cytochrome bc1 complex contains 3 respiratory subunits (MT-CYB, CYC1 and UQCRFS1), 2 core proteins (UQCRC1 and UQCRC2) and probably 6 low-molecular weight proteins. Heme b is required as a cofactor.

The protein localises to the mitochondrion inner membrane. Its function is as follows. Component of the ubiquinol-cytochrome c reductase complex (complex III or cytochrome b-c1 complex) that is part of the mitochondrial respiratory chain. The b-c1 complex mediates electron transfer from ubiquinol to cytochrome c. Contributes to the generation of a proton gradient across the mitochondrial membrane that is then used for ATP synthesis. In Negaprion brevirostris (Lemon shark), this protein is Cytochrome b (mt-cyb).